The following is a 501-amino-acid chain: Pentatricopeptide repeat-containing protein At4g14190, chloroplastic (501 aa).

The transit peptide at 1–88 directs the protein to the chloroplast; sequence MENLTTAQFL…SGSCPLRLLQ (88 aa). PPR repeat units lie at residues 130-160, 166-200, 201-235, 236-270, and 271-305; these read SENN…MIDD, SLEI…GLLP, ITET…GCVR, DHVT…KMTL, and EPST…GISL.

Belongs to the PPR family. P subfamily.

It is found in the plastid. The protein resides in the chloroplast. The polypeptide is Pentatricopeptide repeat-containing protein At4g14190, chloroplastic (Arabidopsis thaliana (Mouse-ear cress)).